The chain runs to 58 residues: Conotoxin TxXIIIA (58 aa).

A signal peptide spans 1–22 (MRCLPVFVILLLLIASVPSVDA). A propeptide spanning residues 23-46 (ELKAKDDMPQASFHDNAERDQQKK) is cleaved from the precursor.

As to quaternary structure, homodimer; disulfide-linked. 5 disulfide bonds are present in each homodimer: two intrachain disulfide bonds per subunit, and one interchain disulfide bond linking the two subunits. As to expression, expressed by the venom duct.

It is found in the secreted. This is Conotoxin TxXIIIA from Conus textile (Cloth-of-gold cone).